Here is a 125-residue protein sequence, read N- to C-terminus: Protein ApaG (125 aa).

The 125-residue stretch at 1–125 folds into the ApaG domain; sequence MIEQPRICVQ…FRLAIPALIH (125 aa).

This chain is Protein ApaG, found in Yersinia pseudotuberculosis serotype IB (strain PB1/+).